We begin with the raw amino-acid sequence, 451 residues long: tRNA modification GTPase MnmE (451 aa).

Residues arginine 23, glutamate 80, and lysine 119 each coordinate (6S)-5-formyl-5,6,7,8-tetrahydrofolate. Residues 215–372 (GIKVVLAGQP…LRAALLKTAG (158 aa)) form the TrmE-type G domain. Asparagine 225 lines the K(+) pocket. Residues 225 to 230 (NVGKSS), 244 to 250 (TDIPGTT), and 269 to 272 (DTAG) contribute to the GTP site. Serine 229 serves as a coordination point for Mg(2+). Residues threonine 244, isoleucine 246, and threonine 249 each coordinate K(+). Threonine 250 contributes to the Mg(2+) binding site. Lysine 451 contacts (6S)-5-formyl-5,6,7,8-tetrahydrofolate.

Belongs to the TRAFAC class TrmE-Era-EngA-EngB-Septin-like GTPase superfamily. TrmE GTPase family. As to quaternary structure, homodimer. Heterotetramer of two MnmE and two MnmG subunits. K(+) is required as a cofactor.

It localises to the cytoplasm. Functionally, exhibits a very high intrinsic GTPase hydrolysis rate. Involved in the addition of a carboxymethylaminomethyl (cmnm) group at the wobble position (U34) of certain tRNAs, forming tRNA-cmnm(5)s(2)U34. In Nitrosomonas europaea (strain ATCC 19718 / CIP 103999 / KCTC 2705 / NBRC 14298), this protein is tRNA modification GTPase MnmE.